The primary structure comprises 333 residues: Glyceraldehyde-3-phosphate dehydrogenase (333 aa).

NAD(+)-binding positions include 11 to 12 (RI), Asp35, and Thr121. D-glyceraldehyde 3-phosphate-binding positions include 151–153 (SCT) and Thr182. Cys152 serves as the catalytic Nucleophile. Asn183 is an NAD(+) binding site. D-glyceraldehyde 3-phosphate-binding positions include Arg197, 210–211 (TG), and Arg233. NAD(+) is bound at residue Asn315.

Belongs to the glyceraldehyde-3-phosphate dehydrogenase family. As to quaternary structure, homotetramer.

It is found in the cytoplasm. It carries out the reaction D-glyceraldehyde 3-phosphate + phosphate + NAD(+) = (2R)-3-phospho-glyceroyl phosphate + NADH + H(+). The protein operates within carbohydrate degradation; glycolysis; pyruvate from D-glyceraldehyde 3-phosphate: step 1/5. In terms of biological role, catalyzes the oxidative phosphorylation of glyceraldehyde 3-phosphate (G3P) to 1,3-bisphosphoglycerate (BPG) using the cofactor NAD. The first reaction step involves the formation of a hemiacetal intermediate between G3P and a cysteine residue, and this hemiacetal intermediate is then oxidized to a thioester, with concomitant reduction of NAD to NADH. The reduced NADH is then exchanged with the second NAD, and the thioester is attacked by a nucleophilic inorganic phosphate to produce BPG. This chain is Glyceraldehyde-3-phosphate dehydrogenase (gap), found in Thermotoga maritima (strain ATCC 43589 / DSM 3109 / JCM 10099 / NBRC 100826 / MSB8).